The following is a 128-amino-acid chain: Cystatin-12 (128 aa).

An N-terminal signal peptide occupies residues 1–21 (MLWKSVLPVALIVLGIHDCSF). 2 disulfide bridges follow: C82–C92 and C105–C125. A glycan (N-linked (GlcNAc...) asparagine) is linked at N122.

Belongs to the cystatin family.

The protein localises to the secreted. Functionally, may play a specialized role in spermatogenesis. This Rattus norvegicus (Rat) protein is Cystatin-12 (Cst12).